A 429-amino-acid chain; its full sequence is Glutamate-1-semialdehyde 2,1-aminomutase 2 (429 aa).

Lys268 carries the post-translational modification N6-(pyridoxal phosphate)lysine.

This sequence belongs to the class-III pyridoxal-phosphate-dependent aminotransferase family. HemL subfamily. As to quaternary structure, homodimer. Pyridoxal 5'-phosphate is required as a cofactor.

The protein localises to the cytoplasm. It catalyses the reaction (S)-4-amino-5-oxopentanoate = 5-aminolevulinate. The protein operates within porphyrin-containing compound metabolism; protoporphyrin-IX biosynthesis; 5-aminolevulinate from L-glutamyl-tRNA(Glu): step 2/2. This Bacillus cereus (strain ATCC 10987 / NRS 248) protein is Glutamate-1-semialdehyde 2,1-aminomutase 2.